A 185-amino-acid polypeptide reads, in one-letter code: Ribosome-recycling factor (185 aa).

It belongs to the RRF family.

Its subcellular location is the cytoplasm. Responsible for the release of ribosomes from messenger RNA at the termination of protein biosynthesis. May increase the efficiency of translation by recycling ribosomes from one round of translation to another. This chain is Ribosome-recycling factor, found in Shewanella halifaxensis (strain HAW-EB4).